Reading from the N-terminus, the 410-residue chain is Serine hydroxymethyltransferase (410 aa).

Residues Leu116 and 120–122 each bind (6S)-5,6,7,8-tetrahydrofolate; that span reads GHL. An N6-(pyridoxal phosphate)lysine modification is found at Lys225. 349-351 provides a ligand contact to (6S)-5,6,7,8-tetrahydrofolate; sequence SPF.

The protein belongs to the SHMT family. In terms of assembly, homodimer. Requires pyridoxal 5'-phosphate as cofactor.

It is found in the cytoplasm. It carries out the reaction (6R)-5,10-methylene-5,6,7,8-tetrahydrofolate + glycine + H2O = (6S)-5,6,7,8-tetrahydrofolate + L-serine. The protein operates within one-carbon metabolism; tetrahydrofolate interconversion. Its pathway is amino-acid biosynthesis; glycine biosynthesis; glycine from L-serine: step 1/1. Its function is as follows. Catalyzes the reversible interconversion of serine and glycine with tetrahydrofolate (THF) serving as the one-carbon carrier. This reaction serves as the major source of one-carbon groups required for the biosynthesis of purines, thymidylate, methionine, and other important biomolecules. Also exhibits THF-independent aldolase activity toward beta-hydroxyamino acids, producing glycine and aldehydes, via a retro-aldol mechanism. The sequence is that of Serine hydroxymethyltransferase from Leuconostoc citreum (strain KM20).